The sequence spans 410 residues: Divergent protein kinase domain 1C (410 aa).

The Cytoplasmic segment spans residues 1–19; sequence MARAAGERGRAARCGRWRR. Positions 18 to 19 match the May mediate ER retention motif; the sequence is RR. A helical membrane pass occupies residues 20 to 40; the sequence is GALLAFAAWTAGWVLAAALLL. Residues 41 to 410 are Lumenal-facing; sequence RAHPSVLSER…TLKELQEAEK (370 aa).

This sequence belongs to the DIPK family. In terms of processing, among the many cysteines in the lumenal domain, most are probably involved in disulfide bonds. As to expression, mainly expressed in the brain and eye, some expression in kidney and skeletal muscle.

It is found in the endoplasmic reticulum membrane. The chain is Divergent protein kinase domain 1C (Dipk1c) from Mus musculus (Mouse).